Consider the following 875-residue polypeptide: Alanine--tRNA ligase (875 aa).

His-562, His-566, Cys-665, and His-669 together coordinate Zn(2+).

This sequence belongs to the class-II aminoacyl-tRNA synthetase family. Zn(2+) is required as a cofactor.

The protein localises to the cytoplasm. The catalysed reaction is tRNA(Ala) + L-alanine + ATP = L-alanyl-tRNA(Ala) + AMP + diphosphate. Its function is as follows. Catalyzes the attachment of alanine to tRNA(Ala) in a two-step reaction: alanine is first activated by ATP to form Ala-AMP and then transferred to the acceptor end of tRNA(Ala). Also edits incorrectly charged Ser-tRNA(Ala) and Gly-tRNA(Ala) via its editing domain. In Saccharophagus degradans (strain 2-40 / ATCC 43961 / DSM 17024), this protein is Alanine--tRNA ligase.